A 398-amino-acid chain; its full sequence is 1-deoxy-D-xylulose 5-phosphate reductoisomerase (398 aa).

NADPH-binding residues include Thr-11, Gly-12, Ser-13, Ile-14, Arg-38, Asn-39, and Asn-125. Lys-126 serves as a coordination point for 1-deoxy-D-xylulose 5-phosphate. Residue Glu-127 coordinates NADPH. Asp-151 provides a ligand contact to Mn(2+). 1-deoxy-D-xylulose 5-phosphate contacts are provided by Ser-152, Glu-153, Ser-179, and His-202. Glu-153 is a binding site for Mn(2+). Gly-208 is an NADPH binding site. Positions 215, 220, 221, and 224 each coordinate 1-deoxy-D-xylulose 5-phosphate. Glu-224 is a binding site for Mn(2+).

Belongs to the DXR family. It depends on Mg(2+) as a cofactor. Mn(2+) is required as a cofactor.

It carries out the reaction 2-C-methyl-D-erythritol 4-phosphate + NADP(+) = 1-deoxy-D-xylulose 5-phosphate + NADPH + H(+). The protein operates within isoprenoid biosynthesis; isopentenyl diphosphate biosynthesis via DXP pathway; isopentenyl diphosphate from 1-deoxy-D-xylulose 5-phosphate: step 1/6. Functionally, catalyzes the NADPH-dependent rearrangement and reduction of 1-deoxy-D-xylulose-5-phosphate (DXP) to 2-C-methyl-D-erythritol 4-phosphate (MEP). The protein is 1-deoxy-D-xylulose 5-phosphate reductoisomerase of Burkholderia vietnamiensis (strain G4 / LMG 22486) (Burkholderia cepacia (strain R1808)).